The primary structure comprises 201 residues: 3-isopropylmalate dehydratase small subunit (201 aa).

The protein belongs to the LeuD family. LeuD type 1 subfamily. As to quaternary structure, heterodimer of LeuC and LeuD.

It catalyses the reaction (2R,3S)-3-isopropylmalate = (2S)-2-isopropylmalate. The protein operates within amino-acid biosynthesis; L-leucine biosynthesis; L-leucine from 3-methyl-2-oxobutanoate: step 2/4. Catalyzes the isomerization between 2-isopropylmalate and 3-isopropylmalate, via the formation of 2-isopropylmaleate. This chain is 3-isopropylmalate dehydratase small subunit, found in Parvibaculum lavamentivorans (strain DS-1 / DSM 13023 / NCIMB 13966).